Reading from the N-terminus, the 172-residue chain is Austinoid biosynthesis clusters protein J (172 aa).

The protein belongs to the trt14 isomerase family. In terms of assembly, homodimer.

The protein operates within secondary metabolite biosynthesis; terpenoid biosynthesis. Functionally, part of the gene cluster B that mediates the biosynthesis of the fungal meroterpenoid acetoxydehydroaustin. The first step of the pathway is the synthesis of 3,5-dimethylorsellinic acid by the polyketide synthase ausA. 3,5-dimethylorsellinic acid is then prenylated by the polyprenyl transferase ausN. Further epoxidation by the FAD-dependent monooxygenase ausM and cyclization by the probable terpene cyclase ausL lead to the formation of protoaustinoid A. Protoaustinoid A is then oxidized to spiro-lactone preaustinoid A3 by the combined action of the FAD-binding monooxygenases ausB and ausC, and the dioxygenase ausE. Acid-catalyzed keto-rearrangement and ring contraction of the tetraketide portion of preaustinoid A3 by ausJ lead to the formation of preaustinoid A4. The aldo-keto reductase ausK, with the help of ausH, is involved in the next step by transforming preaustinoid A4 into isoaustinone which is in turn hydroxylated by the P450 monooxygenase ausI to form austinolide. The cytochrome P450 monooxygenase ausG then modifies austinolide to austinol. Austinol is further acetylated to austin by the O-acetyltransferase ausP, which spontaneously changes to dehydroaustin. The cytochrome P450 monooxygenase then converts dehydroaustin is into 7-dehydrodehydroaustin. The hydroxylation catalyzed by ausR permits the second O-acetyltransferase ausQ to add an additional acetyl group to the molecule, leading to the formation of acetoxydehydroaustin. Due to genetic rearrangements of the clusters and the subsequent loss of some enzymes, the end product of the Penicillium brasilianum austinoid biosynthesis clusters is acetoxydehydroaustin. The chain is Austinoid biosynthesis clusters protein J from Penicillium brasilianum.